Here is a 525-residue protein sequence, read N- to C-terminus: Endoglucanase 10 (525 aa).

A signal peptide spans methionine 1 to alanine 26. Aspartate 109 serves as the catalytic Nucleophile. Residue asparagine 259 is glycosylated (N-linked (GlcNAc...) asparagine). The active site involves histidine 442. 2 N-linked (GlcNAc...) asparagine glycosylation sites follow: asparagine 464 and asparagine 484. Active-site residues include aspartate 489 and glutamate 498.

This sequence belongs to the glycosyl hydrolase 9 (cellulase E) family.

The protein localises to the secreted. It carries out the reaction Endohydrolysis of (1-&gt;4)-beta-D-glucosidic linkages in cellulose, lichenin and cereal beta-D-glucans.. The polypeptide is Endoglucanase 10 (Arabidopsis thaliana (Mouse-ear cress)).